The primary structure comprises 171 residues: 16S rRNA aminocarboxypropyltransferase (171 aa).

The S-adenosyl-L-methionine site is built by T18, L68, L91, and S110.

This sequence belongs to the TDD superfamily. TSR3 family.

The protein localises to the cytoplasm. The enzyme catalyses an N(1)-methylpseudouridine in rRNA + S-adenosyl-L-methionine = N(1)-methyl-N(3)-[(3S)-3-amino-3-carboxypropyl]pseudouridine in rRNA + S-methyl-5'-thioadenosine + H(+). In terms of biological role, aminocarboxypropyltransferase that catalyzes the aminocarboxypropyl transfer on pseudouridine corresponding to position 914 in M.jannaschii 16S rRNA. It constitutes the last step in biosynthesis of the hypermodified N1-methyl-N3-(3-amino-3-carboxypropyl) pseudouridine (m1acp3-Psi). The polypeptide is 16S rRNA aminocarboxypropyltransferase (Methanosphaera stadtmanae (strain ATCC 43021 / DSM 3091 / JCM 11832 / MCB-3)).